Consider the following 196-residue polypeptide: UPF0056 membrane protein BUsg_434 (196 aa).

6 consecutive transmembrane segments (helical) span residues 8-28 (TILLILIMDPLGNLPIFMTIL), 45-65 (IIALIVMLIFLFVGEKILTIL), 71-91 (TVSISGGIILFLIAIKMIFPS), 105-125 (FLVPLAIPLVAGPSLLATLML), 134-154 (MPYLVGSLLIAWFFTIIILLL), and 174-194 (MGLILIMLSTQMFLDGIKAWF).

This sequence belongs to the UPF0056 (MarC) family.

Its subcellular location is the cell membrane. In Buchnera aphidicola subsp. Schizaphis graminum (strain Sg), this protein is UPF0056 membrane protein BUsg_434.